The chain runs to 443 residues: Xaa-Pro dipeptidase (443 aa).

Mn(2+) is bound by residues D246, D257, H339, E384, and E423.

It belongs to the peptidase M24B family. Bacterial-type prolidase subfamily. Requires Mn(2+) as cofactor.

It catalyses the reaction Xaa-L-Pro dipeptide + H2O = an L-alpha-amino acid + L-proline. Splits dipeptides with a prolyl residue in the C-terminal position. The polypeptide is Xaa-Pro dipeptidase (Salmonella arizonae (strain ATCC BAA-731 / CDC346-86 / RSK2980)).